A 169-amino-acid polypeptide reads, in one-letter code: S-ribosylhomocysteine lyase (169 aa).

Fe cation-binding residues include histidine 54, histidine 58, and cysteine 128.

Belongs to the LuxS family. In terms of assembly, homodimer. Fe cation serves as cofactor.

The catalysed reaction is S-(5-deoxy-D-ribos-5-yl)-L-homocysteine = (S)-4,5-dihydroxypentane-2,3-dione + L-homocysteine. Involved in the synthesis of autoinducer 2 (AI-2) which is secreted by bacteria and is used to communicate both the cell density and the metabolic potential of the environment. The regulation of gene expression in response to changes in cell density is called quorum sensing. Catalyzes the transformation of S-ribosylhomocysteine (RHC) to homocysteine (HC) and 4,5-dihydroxy-2,3-pentadione (DPD). The chain is S-ribosylhomocysteine lyase from Psychromonas ingrahamii (strain DSM 17664 / CCUG 51855 / 37).